The following is a 342-amino-acid chain: Anthranilate phosphoribosyltransferase (342 aa).

Residues Gly-74, 77 to 78 (GD), Thr-82, 84 to 87 (NVST), 101 to 109 (KHGNRSVSG), and Ser-113 each bind 5-phospho-alpha-D-ribose 1-diphosphate. Gly-74 lines the anthranilate pocket. Position 86 (Ser-86) interacts with Mg(2+). Residue Asn-104 participates in anthranilate binding. An anthranilate-binding site is contributed by Arg-159. Residues Asp-218 and Glu-219 each contribute to the Mg(2+) site.

This sequence belongs to the anthranilate phosphoribosyltransferase family. As to quaternary structure, homodimer. Mg(2+) serves as cofactor.

It catalyses the reaction N-(5-phospho-beta-D-ribosyl)anthranilate + diphosphate = 5-phospho-alpha-D-ribose 1-diphosphate + anthranilate. It functions in the pathway amino-acid biosynthesis; L-tryptophan biosynthesis; L-tryptophan from chorismate: step 2/5. Its function is as follows. Catalyzes the transfer of the phosphoribosyl group of 5-phosphorylribose-1-pyrophosphate (PRPP) to anthranilate to yield N-(5'-phosphoribosyl)-anthranilate (PRA). This Sulfolobus acidocaldarius (strain ATCC 33909 / DSM 639 / JCM 8929 / NBRC 15157 / NCIMB 11770) protein is Anthranilate phosphoribosyltransferase.